Reading from the N-terminus, the 124-residue chain is Small ribosomal subunit protein bS6 (124 aa).

The interval isoleucine 101–alanine 124 is disordered. A compositionally biased stretch (basic and acidic residues) spans glutamate 105–alanine 115.

It belongs to the bacterial ribosomal protein bS6 family.

In terms of biological role, binds together with bS18 to 16S ribosomal RNA. This is Small ribosomal subunit protein bS6 from Polynucleobacter asymbioticus (strain DSM 18221 / CIP 109841 / QLW-P1DMWA-1) (Polynucleobacter necessarius subsp. asymbioticus).